A 550-amino-acid chain; its full sequence is Eukaryotic translation initiation factor 3 subunit D-2 (550 aa).

The segment at 108–152 is disordered; sequence RTRGRTGRGTPNIASLGGSTAGGATASTTKYGKGRHTRNTQNVGR. A compositionally biased stretch (low complexity) spans 115–136; it reads RGTPNIASLGGSTAGGATASTT. The interval 290–304 is RNA gate; sequence QFDLLTVNETSVEPP. The segment at 527-550 is disordered; the sequence is PENAFDSDRDEEESSEPLSNSNDN.

This sequence belongs to the eIF-3 subunit D family. In terms of assembly, component of the eukaryotic translation initiation factor 3 (eIF-3) complex. The eIF-3 complex interacts with pix.

It is found in the cytoplasm. In terms of biological role, mRNA cap-binding component of the eukaryotic translation initiation factor 3 (eIF-3) complex, which is involved in protein synthesis of a specialized repertoire of mRNAs and, together with other initiation factors, stimulates binding of mRNA and methionyl-tRNAi to the 40S ribosome. The eIF-3 complex specifically targets and initiates translation of a subset of mRNAs involved in cell proliferation. In the eIF-3 complex, eif3d specifically recognizes and binds the 7-methylguanosine cap of a subset of mRNAs. In Drosophila sechellia (Fruit fly), this protein is Eukaryotic translation initiation factor 3 subunit D-2.